Reading from the N-terminus, the 353-residue chain is Heterogeneous nuclear ribonucleoproteins A2/B1 (353 aa).

M1 carries the N-acetylmethionine modification. Phosphothreonine is present on T4. The short motif at 9-15 is the Nuclear localization signal element; it reads PLERKKR. RRM domains follow at residues 21–104 and 112–191; these read RKLF…ESGK and KKLF…LSRQ. A Glycyl lysine isopeptide (Lys-Gly) (interchain with G-Cter in SUMO2) cross-link involves residue K22. Position 29 is a phosphoserine (S29). At R38 the chain carries Omega-N-methylarginine. At S85 the chain carries Phosphoserine. At K104 the chain carries N6,N6-dimethyllysine; alternate. A Glycyl lysine isopeptide (Lys-Gly) (interchain with G-Cter in SUMO2); alternate cross-link involves residue K104. Glycyl lysine isopeptide (Lys-Gly) (interchain with G-Cter in SUMO2) cross-links involve residues K112, K120, and K137. Residue T140 is modified to Phosphothreonine. At S149 the chain carries Phosphoserine. K152 is covalently cross-linked (Glycyl lysine isopeptide (Lys-Gly) (interchain with G-Cter in SUMO2)). Residue T159 is modified to Phosphothreonine. Residues K168 and K173 each participate in a glycyl lysine isopeptide (Lys-Gly) (interchain with G-Cter in SUMO2); alternate cross-link. K168 and K173 each carry N6-acetyllysine; alternate. The residue at position 176 (T176) is a Phosphothreonine. K186 is covalently cross-linked (Glycyl lysine isopeptide (Lys-Gly) (interchain with G-Cter in SUMO2)). Residues S189 and S201 each carry the phosphoserine modification. A disordered region spans residues 193–353; sequence MQEVQSSRSG…SGGYGGRSRY (161 aa). Positions 202-223 are enriched in gly residues; that stretch reads GRGGNFGFGDSRGGGGNFGPGP. The residue at position 203 (R203) is an Asymmetric dimethylarginine; alternate. Position 203 is a dimethylated arginine; alternate (R203). The residue at position 203 (R203) is an Omega-N-methylarginine; alternate. S212 carries the post-translational modification Phosphoserine. R213 carries the post-translational modification Asymmetric dimethylarginine; alternate. R213 carries the post-translational modification Dimethylated arginine; alternate. R213 carries the post-translational modification Omega-N-methylarginine; alternate. Phosphoserine is present on S225. The residue at position 228 (R228) is an Omega-N-methylarginine. A phosphoserine mark is found at S231 and S236. R238 carries the post-translational modification Omega-N-methylarginine. S259 carries the post-translational modification Phosphoserine. Asymmetric dimethylarginine; alternate is present on R266. The residue at position 266 (R266) is an Omega-N-methylarginine; alternate. Residues 308 to 347 form a nuclear targeting sequence region; sequence QQPSNYGPMKSGNFGGSRNMGGPYGGGNYGPGGSGGSGGY. The span at 320–353 shows a compositional bias: gly residues; that stretch reads NFGGSRNMGGPYGGGNYGPGGSGGSGGYGGRSRY. S324 is modified (phosphoserine). Residue R325 is modified to Omega-N-methylarginine. Y331 carries the post-translational modification Phosphotyrosine. 2 positions are modified to phosphoserine: S341 and S344. Phosphotyrosine is present on Y347. R350 is subject to Omega-N-methylarginine.

In terms of assembly, identified in the spliceosome C complex. Identified in a IGF2BP1-dependent mRNP granule complex containing untranslated mRNAs. Interacts with IGF2BP1. Interacts with C9orf72. Interacts with DGCR8. Interacts with TARDBP. Interacts with CKAP5. Interacts with PPIA/CYPA. Interacts (via C-terminus) with FAM76B; the interaction results in retention of HNRNPA2B1 in the nucleus and inhibition of the NF-kappa-B-mediated inflammatory pathway. Interacts with NF-kappa-B inhibitors NFKBIA and NFKBIE; the interaction may be mediated by the RRM2 domain of HNRNPA2B1, and HNRNPA2B1 may interact simultaneously with FAM76B and either NFKBIA or NFKBIE to form a complex. Post-translationally, sumoylated in exosomes, promoting miRNAs-binding. Asymmetric dimethylation at Arg-266 constitutes the major methylation site. According to a report, methylation affects subcellular location and promotes nuclear localization. According to another report, methylation at Arg-266 does not influence nucleocytoplasmic shuttling.

It localises to the nucleus. Its subcellular location is the nucleoplasm. The protein resides in the cytoplasmic granule. It is found in the secreted. The protein localises to the extracellular exosome. Its function is as follows. Heterogeneous nuclear ribonucleoprotein (hnRNP) that associates with nascent pre-mRNAs, packaging them into hnRNP particles. The hnRNP particle arrangement on nascent hnRNA is non-random and sequence-dependent and serves to condense and stabilize the transcripts and minimize tangling and knotting. Packaging plays a role in various processes such as transcription, pre-mRNA processing, RNA nuclear export, subcellular location, mRNA translation and stability of mature mRNAs. Forms hnRNP particles with at least 20 other different hnRNP and heterogeneous nuclear RNA in the nucleus. Involved in transport of specific mRNAs to the cytoplasm in oligodendrocytes and neurons: acts by specifically recognizing and binding the A2RE (21 nucleotide hnRNP A2 response element) or the A2RE11 (derivative 11 nucleotide oligonucleotide) sequence motifs present on some mRNAs, and promotes their transport to the cytoplasm. Specifically binds single-stranded telomeric DNA sequences, protecting telomeric DNA repeat against endonuclease digestion. Also binds other RNA molecules, such as primary miRNA (pri-miRNAs): acts as a nuclear 'reader' of the N6-methyladenosine (m6A) mark by specifically recognizing and binding a subset of nuclear m6A-containing pri-miRNAs. Binding to m6A-containing pri-miRNAs promotes pri-miRNA processing by enhancing binding of DGCR8 to pri-miRNA transcripts. Involved in miRNA sorting into exosomes following sumoylation, possibly by binding (m6A)-containing pre-miRNAs. Acts as a regulator of efficiency of mRNA splicing, possibly by binding to m6A-containing pre-mRNAs. Plays a role in the splicing of pyruvate kinase PKM by binding repressively to sequences flanking PKM exon 9, inhibiting exon 9 inclusion and resulting in exon 10 inclusion and production of the PKM M2 isoform. The chain is Heterogeneous nuclear ribonucleoproteins A2/B1 (HNRNPA2B1) from Pongo abelii (Sumatran orangutan).